Here is a 115-residue protein sequence, read N- to C-terminus: Large ribosomal subunit protein bL20 (115 aa).

Belongs to the bacterial ribosomal protein bL20 family.

Its function is as follows. Binds directly to 23S ribosomal RNA and is necessary for the in vitro assembly process of the 50S ribosomal subunit. It is not involved in the protein synthesizing functions of that subunit. The polypeptide is Large ribosomal subunit protein bL20 (Parasynechococcus marenigrum (strain WH8102)).